The primary structure comprises 499 residues: Cytosol aminopeptidase (499 aa).

Residues lysine 267 and aspartate 272 each coordinate Mn(2+). The active site involves lysine 279. Aspartate 290, aspartate 349, and glutamate 351 together coordinate Mn(2+). Residue arginine 353 is part of the active site.

The protein belongs to the peptidase M17 family. The cofactor is Mn(2+).

It localises to the cytoplasm. The enzyme catalyses Release of an N-terminal amino acid, Xaa-|-Yaa-, in which Xaa is preferably Leu, but may be other amino acids including Pro although not Arg or Lys, and Yaa may be Pro. Amino acid amides and methyl esters are also readily hydrolyzed, but rates on arylamides are exceedingly low.. The catalysed reaction is Release of an N-terminal amino acid, preferentially leucine, but not glutamic or aspartic acids.. Functionally, presumably involved in the processing and regular turnover of intracellular proteins. Catalyzes the removal of unsubstituted N-terminal amino acids from various peptides. This chain is Cytosol aminopeptidase (pepA), found in Buchnera aphidicola subsp. Acyrthosiphon pisum (strain APS) (Acyrthosiphon pisum symbiotic bacterium).